The primary structure comprises 372 residues: uncharacterized protein (372 aa).

A signal peptide spans 1-24 (MSYYQIIVCILASISYIILLEVIA). In terms of domain architecture, PA spans 92 to 215 (PNRNDTDASY…SSYNLLWSDL (124 aa)). The helical transmembrane segment at 236–256 (FWPFLLCFSPSIIMLITVQAL) threads the bilayer. Position 280 is a phosphoserine (serine 280). The segment at 321–363 (CVICLESFTKGDKVVALPCKHEFHRPCIAKWIVDYRHACPTCN) adopts an RING-type; atypical zinc-finger fold.

The protein resides in the golgi apparatus membrane. Its subcellular location is the vacuole membrane. This is an uncharacterized protein from Schizosaccharomyces pombe (strain 972 / ATCC 24843) (Fission yeast).